Here is a 128-residue protein sequence, read N- to C-terminus: UPF0102 protein Acry_2261 (128 aa).

It belongs to the UPF0102 family.

This chain is UPF0102 protein Acry_2261, found in Acidiphilium cryptum (strain JF-5).